We begin with the raw amino-acid sequence, 434 residues long: MVVKFTKSEALHKEALEHIVGGVNSPSRSFKAVGGGAPVAMERGKGAYFWDVDGNKYIDYLAAYGPIITGHAHPHITKAITTAAENGVLYGTPTALEVKFAKMLKEAMPALDKVRFVNSGTEAVMTTIRVARAYTGRTKIMKFAGCYHGHSDLVLVAAGSGPSTLGTPDSAGVPQSIAQEVITVPFNNVETLKEALDKWGHEVAAILVEPIVGNFGIVEPKPGFLEKVNELVHEAGALVIYDEVITAFRFMYGGAQDLLGVTPDLTALGKVIGGGLPIGAYGGKKEIMEQVAPLGPAYQAGTMAGNPASMASGIACLEVLQQEGLYEKLDELGAMLEKGILEQAAKHNIDITLNRLKGALTVYFTTNTIEDYDAAQDTDGEMFGKFFKLMLQEGVNLAPSKYEAWFLTTEHTKEDIEYTIEAVGRAFATLADNK.

N6-(pyridoxal phosphate)lysine is present on K270.

Belongs to the class-III pyridoxal-phosphate-dependent aminotransferase family. HemL subfamily. As to quaternary structure, homodimer. Pyridoxal 5'-phosphate is required as a cofactor.

The protein resides in the cytoplasm. The enzyme catalyses (S)-4-amino-5-oxopentanoate = 5-aminolevulinate. Its pathway is porphyrin-containing compound metabolism; protoporphyrin-IX biosynthesis; 5-aminolevulinate from L-glutamyl-tRNA(Glu): step 2/2. The sequence is that of Glutamate-1-semialdehyde 2,1-aminomutase 1 from Bacillus thuringiensis (strain Al Hakam).